The sequence spans 473 residues: MQLHGKMTATAKSCALDFLDFVNASPTPYHAVQNLAEHYMSHGFQYLSEKSDWQSKIEPGNSYFVTRNKSSIIAFSIGKKWKPGNGFSIIATHTDSPTLRLKPKSQKSAYGYLQVGVEKYGGGIWHTWFDRDLSLAGRVMVEEEDGRVIQYNVHIDRPLLRIPTLAIHLDPSANSSFSFNMETEFVPLIGLENELAKEETSDNGDKYHHPVLLSLLANEISKSLETTIDPSKIVDFELILGDAEKARLGGIHEEFVFSPRLDNLGMTFCASQALTKSLENNSLDNESCVRVVPSFDHEEIGSVSAQGAESTFLPAVLQRICELGKESSLFSISMVKSFLVSADMAHAMHPNYSSRYENSNTPFLNKGTVIKVNANQRYTTNSAGIVLLKKVAQLADVPIQSFVVRNDSPCGSTIGPKLAAMTGMRTLDLGNPMLSMHSCREMCGSKDFEYAVVLFSSFFQNFANLEEKIIIDE.

Histidine 93 is a Zn(2+) binding site. Residue histidine 168 coordinates substrate. Positions 262, 298, 299, and 343 each coordinate Zn(2+). Glutamate 298 is a substrate binding site. Aspartate 343, histidine 346, lysine 371, and tyrosine 378 together coordinate substrate. A Zn(2+)-binding site is contributed by histidine 437.

It belongs to the peptidase M18 family. As to quaternary structure, tetrahedron-shaped homododecamer built from six homodimers. Interacts with autophagy receptor Nbr1. Zn(2+) serves as cofactor.

Its subcellular location is the cytoplasm. The protein localises to the vacuole lumen. The enzyme catalyses Release of an N-terminal aspartate or glutamate from a peptide, with a preference for aspartate.. Aspartyl aminopeptidase that is able to remove aspartyl residue at N-terminus of angiotensin I. Also acts as a chaperone and efficiently suppressed the thermal aggregation of citrate synthase. In Schizosaccharomyces pombe (strain 972 / ATCC 24843) (Fission yeast), this protein is Aspartyl aminopeptidase 1 (ape4).